We begin with the raw amino-acid sequence, 274 residues long: Octanoyltransferase LipM (274 aa).

One can recognise a BPL/LPL catalytic domain in the interval 31 to 245 (GEVPPTLRLY…GFAEALGARL (215 aa)). The active-site Acyl-thioester intermediate is C147.

It belongs to the octanoyltransferase LipM family. As to quaternary structure, monomer.

The catalysed reaction is octanoyl-[ACP] + L-lysyl-[protein] = N(6)-octanoyl-L-lysyl-[protein] + holo-[ACP] + H(+). Its pathway is protein modification; protein lipoylation via endogenous pathway; protein N(6)-(lipoyl)lysine from octanoyl-[acyl-carrier-protein]. Its function is as follows. Catalyzes the transfer of endogenously produced octanoic acid from octanoyl-acyl-carrier-protein onto the lipoyl domain of GcvH, an intermediate carrier during protein lipoylation. The protein is Octanoyltransferase LipM of Kyrpidia tusciae (strain DSM 2912 / NBRC 15312 / T2) (Bacillus tusciae).